The following is a 376-amino-acid chain: Drebrin-like protein B (376 aa).

The region spanning 2 to 133 is the ADF-H domain; it reads SVNLSKNGAA…EPESIMEKVA (132 aa). A coiled-coil region spans residues 175-231; it reads KENFWAKAEKDEEERRIEEHRRANVEKDRLERERKEREQREAEERERRFRERSKEID. Over residues 202 to 242 the composition is skewed to basic and acidic residues; the sequence is DRLERERKEREQREAEERERRFRERSKEIDGHRKQQEEVEK. Residues 202–288 are disordered; that stretch reads DRLERERKER…FTASQQEEEN (87 aa). Over residues 268–283 the composition is skewed to polar residues; sequence ESGSVSAQPEQFTASQ. The SH3 domain occupies 317-376; sequence DSGMCARALYDYQAADDTEISFDPDDVIIQIEMIDDGWWRGVAPSGHFGMFPANYVELLE.

Belongs to the ABP1 family.

It localises to the cytoplasm. Its subcellular location is the cytoskeleton. The protein resides in the cell projection. It is found in the lamellipodium. The protein localises to the ruffle. It localises to the cell cortex. Its subcellular location is the cytosol. The protein resides in the synapse. It is found in the perikaryon. The protein localises to the neuron projection. It localises to the cell membrane. Its subcellular location is the cytoplasmic vesicle. The protein resides in the clathrin-coated vesicle membrane. It is found in the golgi apparatus membrane. The protein localises to the podosome. It localises to the early endosome. Its subcellular location is the dendrite. The protein resides in the postsynaptic density. Adapter protein that binds F-actin and dynamin, and thereby plays a role in receptor-mediated endocytosis. Plays a role in the reorganization of the actin cytoskeleton, formation of cell projections, such as neurites, in neuron morphogenesis and synapse formation. Does not bind G-actin and promote actin polymerization by itself, but excerts its functions by interaction with other proteins. Required for the formation of organized podosome rosettes. In Xenopus laevis (African clawed frog), this protein is Drebrin-like protein B (dbnl-b).